The primary structure comprises 37 residues: Large ribosomal subunit protein bL36 (37 aa).

Belongs to the bacterial ribosomal protein bL36 family.

In Mycobacterium leprae (strain Br4923), this protein is Large ribosomal subunit protein bL36.